We begin with the raw amino-acid sequence, 295 residues long: Ubiquinol-cytochrome c reductase complex assembly factor 1 (295 aa).

This sequence belongs to the CBP3 family. Interacts with UQCC2. Interacts with UQCC3. Forms a complex, named COMB/coordinator of mitochondrial CYTB biogenesis, composed of UQCC1, UQCC2, UQCC4, UQCC5 and UQCC6; stabilizes nascent cytochrome b/MT-CYB and promotes its membrane insertion. Forms a complex, named COMA, composed of UQCC1, UQCC2 and UQCC4; activates MT-CYB translation. Forms a complex, named COMC, composed of UQCC1, UQCC2; UQCC3 and UQCC4; mediates MT-CYB hemylation and association with the first nuclear-encoded CIII subunit UQCRQ. In the brain it is restricted to the olfactory bulb, the hippocampus, the piriform cortex and the Purkinje cells.

It is found in the mitochondrion inner membrane. The protein localises to the cytoplasmic vesicle. In terms of biological role, required for the assembly of the ubiquinol-cytochrome c reductase complex (mitochondrial respiratory chain complex III or cytochrome b-c1 complex). Involved in cytochrome b translation and/or stability. This chain is Ubiquinol-cytochrome c reductase complex assembly factor 1 (Uqcc1), found in Mus musculus (Mouse).